The following is a 1082-amino-acid chain: Importin-4 (1082 aa).

Methionine 1 is subject to N-acetylmethionine. The region spanning 24–90 (ATEQLQTILR…KSLVLTALQK (67 aa)) is the Importin N-terminal domain. HEAT repeat units follow at residues 348–385 (KLCPHVMPMLEEALRSEDPYQRKAGFLVLAVLSDGAGD), 390–427 (RLLYPLLQIVCKGLDDPSQIVRNAALFALGQFSENLQP), 431–471 (SYSE…NLGP), 475–513 (PYLPELMECMLQPLKNPSKARTKELAVSAIGAIATAAQD), 896–933 (QFVSRLFPVLLNNAREADPEVRSNAIFGLGVLAEHGGC), and 937–975 (DHFPKLLGLLLPLLARERHDRVRDNICGALARVLMASPV).

The protein belongs to the importin beta family. In terms of assembly, found in a cytosolic complex with ASF1 (ASF1A or ASF1B) and histones H3 and H4.

It localises to the cytoplasm. The protein localises to the nucleus. Its function is as follows. Nuclear transport receptor that mediates nuclear import of proteins, such as histones, RPS3A, TNP2 and VDR. Serves as receptor for nuclear localization signals (NLS) in cargo substrates. Is thought to mediate docking of the importin/substrate complex to the nuclear pore complex (NPC) through binding to nucleoporin and the complex is subsequently translocated through the pore by an energy requiring, Ran-dependent mechanism. At the nucleoplasmic side of the NPC, Ran binds to the importin, the importin/substrate complex dissociates and importin is re-exported from the nucleus to the cytoplasm where GTP hydrolysis releases Ran. The directionality of nuclear import is thought to be conferred by an asymmetric distribution of the GTP- and GDP-bound forms of Ran between the cytoplasm and nucleus. Mediates the nuclear import of the histone H3-H4 dimer when in complex with ASF1 (ASF1A or ASF1B). Mediates the ligand-independent nuclear import of vitamin D receptor (VDR). The chain is Importin-4 (Ipo4) from Mus musculus (Mouse).